The sequence spans 388 residues: Phosphoglycerate kinase (388 aa).

Substrate contacts are provided by residues 21-23, Arg-36, 59-62, Arg-114, and Arg-147; these read DLN and HLGR. ATP is bound by residues Lys-198, Glu-315, and 341–344; that span reads GGDT.

Belongs to the phosphoglycerate kinase family. In terms of assembly, monomer.

Its subcellular location is the cytoplasm. It carries out the reaction (2R)-3-phosphoglycerate + ATP = (2R)-3-phospho-glyceroyl phosphate + ADP. The protein operates within carbohydrate degradation; glycolysis; pyruvate from D-glyceraldehyde 3-phosphate: step 2/5. This is Phosphoglycerate kinase from Buchnera aphidicola subsp. Schizaphis graminum (strain Sg).